Reading from the N-terminus, the 236-residue chain is Uridylate kinase (236 aa).

9 to 12 (KISG) is a binding site for ATP. Gly-51 lines the UMP pocket. 2 residues coordinate ATP: Gly-52 and Arg-56. Residues Asp-71 and 132-139 (TGNSHFTT) each bind UMP. Residues Tyr-166 and Asp-169 each contribute to the ATP site.

This sequence belongs to the UMP kinase family. Homohexamer.

It localises to the cytoplasm. It carries out the reaction UMP + ATP = UDP + ADP. The protein operates within pyrimidine metabolism; CTP biosynthesis via de novo pathway; UDP from UMP (UMPK route): step 1/1. With respect to regulation, inhibited by UTP. Its function is as follows. Catalyzes the reversible phosphorylation of UMP to UDP. This chain is Uridylate kinase, found in Mycoplasmoides gallisepticum (strain R(low / passage 15 / clone 2)) (Mycoplasma gallisepticum).